Here is a 301-residue protein sequence, read N- to C-terminus: tRNA pseudouridine synthase B (301 aa).

D38 functions as the Nucleophile in the catalytic mechanism.

The protein belongs to the pseudouridine synthase TruB family. Type 1 subfamily.

It carries out the reaction uridine(55) in tRNA = pseudouridine(55) in tRNA. Responsible for synthesis of pseudouridine from uracil-55 in the psi GC loop of transfer RNAs. The chain is tRNA pseudouridine synthase B from Clostridioides difficile (strain 630) (Peptoclostridium difficile).